The chain runs to 357 residues: MGGAVSAGEDNDDLIDNLKEAQYIRTERVEQAFRAIDRGDYYLEGYRDNAYKDLAWKHGNIHLSAPCIYSEVMEALKLQPGLSFLNLGSGTGYLSTMVGLILGPFGINHGIELHSDVVEYAKEKLESFIKNSDSFDKFEFCEPAFVVGNCLQIASDSHQYDRIYCGAGVQKDHENYMKILLKVGGILVMPIEDQLTQIMRTGQNTWESKNILAVSFAPLVQPSKNDNGTPDSVGLPPCAVRNLQDLARIYIRRTLRNFINDEMQAKGIPQRAPPKRKRKRVKQRINTYVFVGNQLIPQPLDSEEDEKMEEDSKEEEEKEHIEAMKREEPPQNLLREKIMKLPLPESLKAYLTYFRDK.

Gly-2 carries N-myristoyl glycine lipidation. Ser-64 is an active-site residue. 3 adoMet binding motif regions span residues 85-94, 160-164, and 181-191; these read LNLGSGTGYL, YDRIY, and LKVGGILVMPI. Residues 240–250 are BC-box; the sequence is VRNLQDLARIY. The disordered stretch occupies residues 299–331; it reads PLDSEEDEKMEEDSKEEEEKEHIEAMKREEPPQ. The span at 301-317 shows a compositional bias: acidic residues; it reads DSEEDEKMEEDSKEEEE. A compositionally biased stretch (basic and acidic residues) spans 318-331; sequence KEHIEAMKREEPPQ. The tract at residues 341–344 is CUL-box; sequence LPLP.

Belongs to the methyltransferase superfamily. L-isoaspartyl/D-aspartyl protein methyltransferase family. Component of the probable ECS(PCMTD1) E3 ubiquitin-protein ligase complex, at least composed of CUL5, ELOB, ELOC, RBX2 and PCMTD1. Interacts (via the BC-box) with ELOB and ELOC; the interaction is direct and stabilizes PCMTD1.

The protein resides in the cytoplasm. It is found in the membrane. Substrate recognition component of an ECS (Elongin BC-CUL5-SOCS-box protein) E3 ubiquitin ligase complex which mediates the ubiquitination and subsequent proteasomal degradation of target proteins. Specifically binds to the methyltransferase cofactor S-adenosylmethionine (AdoMet) via the N-terminal AdoMet binding motif, but does not display methyltransferase activity. May provide an alternate maintenance pathway for modified proteins by acting as a damage-specific E3 ubiquitin ligase adaptor protein. This is Protein-L-isoaspartate O-methyltransferase domain-containing protein 1 (Pcmtd1) from Mus musculus (Mouse).